The sequence spans 329 residues: Dolichyl-diphosphooligosaccharide--protein glycosyltransferase subunit MAGT1 (329 aa).

An N-terminal signal peptide occupies residues 1-23 (MAGLKGLLFGGILFAMCGGLSEG). Residues 24–178 (QKKKEMVLSD…DVNIRVIRPP (155 aa)) lie on the Extracellular side of the membrane. In terms of domain architecture, Thioredoxin spans 41 to 169 (WASKRPVIRM…LARWVADRTD (129 aa)). Residue N65 is glycosylated (N-linked (GlcNAc...) asparagine). Residues C81 and C84 are joined by a disulfide bond. The helical transmembrane segment at 179 to 199 (NYAGPLMLGLLLAVIGGLVYL) threads the bilayer. The Cytoplasmic segment spans residues 200-212 (RRSNLDFLNNKTG). The helical transmembrane segment at 213–233 (WALAALCFVLAMTSGQMWNHI) threads the bilayer. Residues 234–258 (RGPPYAHKNPHTNQVNYIHGSSQAQ) lie on the Extracellular side of the membrane. A helical membrane pass occupies residues 259 to 279 (FVAETHIVLLFNGAVTLGMVL). The Cytoplasmic segment spans residues 280–294 (LHEAATSDLDVGKRK). A helical transmembrane segment spans residues 295-315 (IMCIAGITLVVIFFSWLLSVF). Residues 316–329 (RSKYHGYPYSFLMT) are Extracellular-facing.

It belongs to the OST3/OST6 family. As to quaternary structure, accessory component of the STT3B-containing form of the oligosaccharyltransferase (OST) complex.

It localises to the cell membrane. Its subcellular location is the endoplasmic reticulum. It is found in the endoplasmic reticulum membrane. It participates in protein modification; protein glycosylation. Functionally, accessory component of the STT3B-containing form of the N-oligosaccharyl transferase (OST) complex which catalyzes the transfer of a high mannose oligosaccharide from a lipid-linked oligosaccharide donor to an asparagine residue within an Asn-X-Ser/Thr consensus motif in nascent polypeptide chains. May be involved in substrate-specific N-glycosylation involving acceptor sites that are near cysteine residues. Could indirectly play a role in Mg(2+) transport in epithelial cells. This chain is Dolichyl-diphosphooligosaccharide--protein glycosyltransferase subunit MAGT1, found in Xenopus laevis (African clawed frog).